The following is a 468-amino-acid chain: Sorting and assembly machinery component 50 homolog (468 aa).

The tract at residues 1–24 (MGTVHARSLDPLPMNGPDFGSHDD) is disordered. In terms of domain architecture, POTRA spans 44-124 (VVVQRVHFEG…LDVTFEVTEL (81 aa)).

This sequence belongs to the SAM50/omp85 family. Associates with the mitochondrial contact site and cristae organizing system (MICOS) complex (also known as MINOS or MitOS complex).

It is found in the mitochondrion outer membrane. May play a role in the maintenance of the structure of mitochondrial cristae. The protein is Sorting and assembly machinery component 50 homolog (samm50) of Xenopus tropicalis (Western clawed frog).